Reading from the N-terminus, the 1064-residue chain is Leucine--tRNA ligase (1064 aa).

The segment at 1–25 (MARAMSETAEPGARTGAADTTVAPT) is disordered. The 'HIGH' region motif lies at 106 to 117 (PYPSGSGLHVGH). A disordered region spans residues 435–456 (GRPGGGTEPADTAGPEAGADPA). The 'KMSKS' region signature appears at 831–835 (KMGKS). Position 834 (Lys834) interacts with ATP.

The protein belongs to the class-I aminoacyl-tRNA synthetase family.

Its subcellular location is the cytoplasm. It catalyses the reaction tRNA(Leu) + L-leucine + ATP = L-leucyl-tRNA(Leu) + AMP + diphosphate. This is Leucine--tRNA ligase from Frankia casuarinae (strain DSM 45818 / CECT 9043 / HFP020203 / CcI3).